A 521-amino-acid polypeptide reads, in one-letter code: Exodeoxyribonuclease 7 large subunit (521 aa).

Residues 494-521 (ATSGAARPKPAAKPSTKAKEPGNQGSLF) are disordered. Positions 498-508 (AARPKPAAKPS) are enriched in low complexity.

It belongs to the XseA family. In terms of assembly, heterooligomer composed of large and small subunits.

It localises to the cytoplasm. The catalysed reaction is Exonucleolytic cleavage in either 5'- to 3'- or 3'- to 5'-direction to yield nucleoside 5'-phosphates.. Its function is as follows. Bidirectionally degrades single-stranded DNA into large acid-insoluble oligonucleotides, which are then degraded further into small acid-soluble oligonucleotides. In Mesorhizobium japonicum (strain LMG 29417 / CECT 9101 / MAFF 303099) (Mesorhizobium loti (strain MAFF 303099)), this protein is Exodeoxyribonuclease 7 large subunit.